Reading from the N-terminus, the 353-residue chain is MWVMSQVRSMEPDLTLAAVYQAAANLTEQDKEIFSEAVKTAFSVCSSAAPSARLRMIETPTQNFMFVTSVIPSGVPSGEKKTKLNIDAALDNLALSFANKKSKKMARTYLLQNVSRTQDQQVAISGTYILYTKKHIETSLMLDKTKLVKQILEYAETPNLLGYTDVRDLECLLWLVFCGPKSFCQSDSCFGYSKTGYNAAFPNLLPPYLYECGQNNGLFFGIVQAYVFSWYSDFDFSALEISERARRRIRSLLYDLKQKFSEQEISVLPVASQMCIFCALYKQNKLSLEYVSGDLKTSVFSPIIIKDCLCVQTTISTTQMLPGTKSSAIFPVYDLRKLLSALVISEGSVRFDI.

This sequence belongs to the herpesviridae UL95 family.

The polypeptide is Protein U67 (U67) (Homo sapiens (Human)).